The primary structure comprises 37 residues: Large ribosomal subunit protein bL36 (37 aa).

Belongs to the bacterial ribosomal protein bL36 family.

The chain is Large ribosomal subunit protein bL36 from Janthinobacterium sp. (strain Marseille) (Minibacterium massiliensis).